We begin with the raw amino-acid sequence, 208 residues long: FMN-dependent NADH:quinone oxidoreductase (208 aa).

Residues 17 to 19, 99 to 102, and 143 to 146 contribute to the FMN site; these read SNS, MWNL, and SRGG.

It belongs to the azoreductase type 1 family. In terms of assembly, homodimer. It depends on FMN as a cofactor.

The enzyme catalyses 2 a quinone + NADH + H(+) = 2 a 1,4-benzosemiquinone + NAD(+). It carries out the reaction N,N-dimethyl-1,4-phenylenediamine + anthranilate + 2 NAD(+) = 2-(4-dimethylaminophenyl)diazenylbenzoate + 2 NADH + 2 H(+). Its function is as follows. Quinone reductase that provides resistance to thiol-specific stress caused by electrophilic quinones. Also exhibits azoreductase activity. Catalyzes the reductive cleavage of the azo bond in aromatic azo compounds to the corresponding amines. The polypeptide is FMN-dependent NADH:quinone oxidoreductase (Staphylococcus aureus (strain MSSA476)).